The sequence spans 253 residues: Ubiquinone/menaquinone biosynthesis C-methyltransferase UbiE (253 aa).

S-adenosyl-L-methionine is bound by residues Thr-76, Asp-97, and 125–126 (NA).

The protein belongs to the class I-like SAM-binding methyltransferase superfamily. MenG/UbiE family.

The catalysed reaction is a 2-demethylmenaquinol + S-adenosyl-L-methionine = a menaquinol + S-adenosyl-L-homocysteine + H(+). The enzyme catalyses a 2-methoxy-6-(all-trans-polyprenyl)benzene-1,4-diol + S-adenosyl-L-methionine = a 5-methoxy-2-methyl-3-(all-trans-polyprenyl)benzene-1,4-diol + S-adenosyl-L-homocysteine + H(+). The protein operates within quinol/quinone metabolism; menaquinone biosynthesis; menaquinol from 1,4-dihydroxy-2-naphthoate: step 2/2. It participates in cofactor biosynthesis; ubiquinone biosynthesis. Functionally, methyltransferase required for the conversion of demethylmenaquinol (DMKH2) to menaquinol (MKH2) and the conversion of 2-polyprenyl-6-methoxy-1,4-benzoquinol (DDMQH2) to 2-polyprenyl-3-methyl-6-methoxy-1,4-benzoquinol (DMQH2). The chain is Ubiquinone/menaquinone biosynthesis C-methyltransferase UbiE from Rhodopseudomonas palustris (strain BisB5).